We begin with the raw amino-acid sequence, 128 residues long: Small ribosomal subunit protein bS6 (128 aa).

Belongs to the bacterial ribosomal protein bS6 family.

Functionally, binds together with bS18 to 16S ribosomal RNA. The sequence is that of Small ribosomal subunit protein bS6 from Acinetobacter baylyi (strain ATCC 33305 / BD413 / ADP1).